A 109-amino-acid chain; its full sequence is Aquaporin-2 (109 aa).

The Cytoplasmic portion of the chain corresponds to 1–6 (SIAFSR). A helical transmembrane segment spans residues 7–27 (AVFAEFLATLIFVFFGLGSAL). Topologically, residues 28–35 (NWQQSLPS) are extracellular. Residues 36–54 (VLQIAMAFGLAIGTLVQAL) form a helical membrane-spanning segment. Residues 55–59 (GHISG) lie on the Cytoplasmic side of the membrane. Residues 60 to 69 (AHINPAVTVA) constitute an intramembrane region (discontinuously helical). Residues 63–65 (NPA) carry the NPA 1 motif. Residues 70–80 (CLVGCHVSFLR) are Cytoplasmic-facing. A helical transmembrane segment spans residues 81-102 (AAFYVAAQLLGAVAGAALLHEV). Residues 103 to 109 (TPSDVRG) lie on the Extracellular side of the membrane.

This sequence belongs to the MIP/aquaporin (TC 1.A.8) family. Homotetramer. In terms of processing, serine phosphorylation is necessary and sufficient for expression at the apical membrane. Endocytosis is not phosphorylation-dependent. N-glycosylated.

It localises to the apical cell membrane. Its subcellular location is the basolateral cell membrane. The protein localises to the cell membrane. It is found in the cytoplasmic vesicle membrane. The protein resides in the golgi apparatus. It localises to the trans-Golgi network membrane. The catalysed reaction is H2O(in) = H2O(out). It carries out the reaction glycerol(in) = glycerol(out). Functionally, forms a water-specific channel that provides the plasma membranes of renal collecting duct with high permeability to water, thereby permitting water to move in the direction of an osmotic gradient. Plays an essential role in renal water homeostasis. Could also be permeable to glycerol. The sequence is that of Aquaporin-2 from Talpa europaea (European mole).